The chain runs to 206 residues: Peptidyl-tRNA hydrolase (206 aa).

Y19 lines the tRNA pocket. H24 (proton acceptor) is an active-site residue. TRNA contacts are provided by F70, N72, and N118.

This sequence belongs to the PTH family. As to quaternary structure, monomer.

The protein resides in the cytoplasm. The catalysed reaction is an N-acyl-L-alpha-aminoacyl-tRNA + H2O = an N-acyl-L-amino acid + a tRNA + H(+). In terms of biological role, hydrolyzes ribosome-free peptidyl-tRNAs (with 1 or more amino acids incorporated), which drop off the ribosome during protein synthesis, or as a result of ribosome stalling. Its function is as follows. Catalyzes the release of premature peptidyl moieties from peptidyl-tRNA molecules trapped in stalled 50S ribosomal subunits, and thus maintains levels of free tRNAs and 50S ribosomes. The polypeptide is Peptidyl-tRNA hydrolase (Synechococcus sp. (strain CC9902)).